The following is a 117-amino-acid chain: Large ribosomal subunit protein uL18 (117 aa).

The protein belongs to the universal ribosomal protein uL18 family. As to quaternary structure, part of the 50S ribosomal subunit; part of the 5S rRNA/L5/L18/L25 subcomplex. Contacts the 5S and 23S rRNAs.

This is one of the proteins that bind and probably mediate the attachment of the 5S RNA into the large ribosomal subunit, where it forms part of the central protuberance. The sequence is that of Large ribosomal subunit protein uL18 from Pectobacterium carotovorum subsp. carotovorum (strain PC1).